Reading from the N-terminus, the 566-residue chain is Urease subunit alpha (566 aa).

The Urease domain maps to 128 to 566 (GGIDTHIHFI…LPMAQRYFLF (439 aa)). Residues His133, His135, and Lys216 each coordinate Ni(2+). The residue at position 216 (Lys216) is an N6-carboxylysine. His218 provides a ligand contact to substrate. Ni(2+) contacts are provided by His245 and His271. His319 serves as the catalytic Proton donor. Asp359 serves as a coordination point for Ni(2+).

It belongs to the metallo-dependent hydrolases superfamily. Urease alpha subunit family. In terms of assembly, heterotrimer of UreA (gamma), UreB (beta) and UreC (alpha) subunits. Three heterotrimers associate to form the active enzyme. Ni cation serves as cofactor. In terms of processing, carboxylation allows a single lysine to coordinate two nickel ions.

Its subcellular location is the cytoplasm. It carries out the reaction urea + 2 H2O + H(+) = hydrogencarbonate + 2 NH4(+). Its pathway is nitrogen metabolism; urea degradation; CO(2) and NH(3) from urea (urease route): step 1/1. This chain is Urease subunit alpha, found in Pseudomonas fluorescens (strain Pf0-1).